The sequence spans 389 residues: Dual-specificity RNA methyltransferase RlmN (389 aa).

Glu-94 serves as the catalytic Proton acceptor. A Radical SAM core domain is found at 134–367 (PRVRVTQCIS…CFVRRRRGDD (234 aa)). A disulfide bridge links Cys-141 with Cys-372. [4Fe-4S] cluster-binding residues include Cys-148, Cys-152, and Cys-155. S-adenosyl-L-methionine-binding positions include 197-198 (GE), Ser-229, 253-255 (SLH), and Asn-329. Residue Cys-372 is the S-methylcysteine intermediate of the active site.

The protein belongs to the radical SAM superfamily. RlmN family. [4Fe-4S] cluster serves as cofactor.

The protein localises to the cytoplasm. It carries out the reaction adenosine(2503) in 23S rRNA + 2 reduced [2Fe-2S]-[ferredoxin] + 2 S-adenosyl-L-methionine = 2-methyladenosine(2503) in 23S rRNA + 5'-deoxyadenosine + L-methionine + 2 oxidized [2Fe-2S]-[ferredoxin] + S-adenosyl-L-homocysteine. The catalysed reaction is adenosine(37) in tRNA + 2 reduced [2Fe-2S]-[ferredoxin] + 2 S-adenosyl-L-methionine = 2-methyladenosine(37) in tRNA + 5'-deoxyadenosine + L-methionine + 2 oxidized [2Fe-2S]-[ferredoxin] + S-adenosyl-L-homocysteine. Specifically methylates position 2 of adenine 2503 in 23S rRNA and position 2 of adenine 37 in tRNAs. m2A2503 modification seems to play a crucial role in the proofreading step occurring at the peptidyl transferase center and thus would serve to optimize ribosomal fidelity. The chain is Dual-specificity RNA methyltransferase RlmN from Sorangium cellulosum (strain So ce56) (Polyangium cellulosum (strain So ce56)).